A 485-amino-acid polypeptide reads, in one-letter code: Adenylate kinase 8 (485 aa).

Adenylate kinase regions lie at residues 58 to 258 (PRVF…TFVL) and 269 to 472 (PRIL…YTVS). 67-72 (ASGKHT) lines the ATP pocket. An NMP 1 region spans residues 87 to 113 (TPESVLSSDVSLLAKEAQSYRDKGQEV). AMP is bound by residues 140-143 (GFPK) and glutamine 147. The LID 1 stretch occupies residues 177–206 (GKRIDTANGEVYHTTFDWPSDPTVQRNLVE). Arginine 218 provides a ligand contact to AMP. Residue 278–283 (GSGRSL) coordinates ATP. The NMP 2 stretch occupies residues 298 to 327 (CCGQVLKEAVADQTKLGEVIQPYIENDQQV). AMP is bound by residues 325-327 (QQV), 354-357 (GFPR), and glutamine 361. Positions 391–424 (LCMTDPVSGERYHDIYKPAPSSEVHERLQQNPRH) are LID 2. Position 432 (arginine 432) interacts with AMP.

The protein belongs to the adenylate kinase family.

The protein localises to the cytoplasm. Its subcellular location is the cytosol. It catalyses the reaction AMP + ATP = 2 ADP. It carries out the reaction a 2'-deoxyribonucleoside 5'-diphosphate + ATP = a 2'-deoxyribonucleoside 5'-triphosphate + ADP. The enzyme catalyses a ribonucleoside 5'-diphosphate + ATP = a ribonucleoside 5'-triphosphate + ADP. Its function is as follows. Nucleoside monophosphate (NMP) kinase that catalyzes the reversible transfer of the terminal phosphate group between nucleoside triphosphates and monophosphates. Has highest activity toward AMP, and weaker activity toward dAMP, CMP and dCMP. Also displays broad nucleoside diphosphate kinase activity. The protein is Adenylate kinase 8 (ak8) of Xenopus tropicalis (Western clawed frog).